A 195-amino-acid chain; its full sequence is MIAIVDYGVGNIANIERALKELGEAVIVTSDLELLGQAEALVLPGVGAYAPAMARLEETGLIEFLQEQATKKPFLGICLGMQLLFESSDEDGQTEGLGILPGTVEKLPSDVRLPHMGWHQLKNHGEAVYFVHSYGAVCDPDWIVDSVEYGRLVPAIVQKDLVTGMQFHPEKSGEVGLKLLKEWRETTCNSTQQSI.

Residues 1-193 (MIAIVDYGVG…RETTCNSTQQ (193 aa)) enclose the Glutamine amidotransferase type-1 domain. Cys-78 serves as the catalytic Nucleophile. Active-site residues include His-168 and Glu-170.

In terms of assembly, heterodimer of HisH and HisF.

It localises to the cytoplasm. It carries out the reaction 5-[(5-phospho-1-deoxy-D-ribulos-1-ylimino)methylamino]-1-(5-phospho-beta-D-ribosyl)imidazole-4-carboxamide + L-glutamine = D-erythro-1-(imidazol-4-yl)glycerol 3-phosphate + 5-amino-1-(5-phospho-beta-D-ribosyl)imidazole-4-carboxamide + L-glutamate + H(+). The catalysed reaction is L-glutamine + H2O = L-glutamate + NH4(+). Its pathway is amino-acid biosynthesis; L-histidine biosynthesis; L-histidine from 5-phospho-alpha-D-ribose 1-diphosphate: step 5/9. Its function is as follows. IGPS catalyzes the conversion of PRFAR and glutamine to IGP, AICAR and glutamate. The HisH subunit catalyzes the hydrolysis of glutamine to glutamate and ammonia as part of the synthesis of IGP and AICAR. The resulting ammonia molecule is channeled to the active site of HisF. The sequence is that of Imidazole glycerol phosphate synthase subunit HisH from Exiguobacterium sibiricum (strain DSM 17290 / CCUG 55495 / CIP 109462 / JCM 13490 / 255-15).